The primary structure comprises 578 residues: MALYRKYRPASFAEVVGQEHVTAPLSVALDAGRINHAYLFSGPRGCGKTSSARILARSLNCAQGPTANPCGVCESCVSLAPNAPGSIDVVELDAASHGGVDDTRELRDRAFYAPVQSRYRVFIVDEAHMVTTAGFNALLKIVEEPPEHLIFIFATTEPEKVLPTIRSRTHHYPFRLLPPRTMRALLARICEQEGVVVDDAVYPLVIRAGGGSPRDTLSVLDQLLAGAADTHVTYTRALGLLGVTDVALIDDAVDALAACDAAALFGAIESVIDGGHDPRRFATDLLERFRDLIVLQSVPDAASRGVVDAPEDALDRMREQAARIGRATLTRYAEVVQAGLGEMRGATAPRLLLEVVCARLLLPSASDAESALLQRVERIETRLDMSIPAPQAVPRPSAAAAEPKHQPAREPRPVLAPTPASSEPTVAAVRSMWPTVRDKVRLRSRTTEVMLAGATVRALEDNTLVLTHESAPLARRLSEQRNADVLAEALKDALGVNWRVRCETGEPAAAASPVGGGANVATAKAVNPAPTANSTQRDEEEHMLAEAGRGDPSPRRDPEEVALELLQNELGARRIDNA.

Residue 42-49 (GPRGCGKT) coordinates ATP. 4 residues coordinate Zn(2+): Cys-61, Cys-70, Cys-73, and Cys-76. Disordered regions lie at residues 389–423 (APQA…ASSE) and 525–559 (AVNP…RDPE). Basic and acidic residues-rich tracts occupy residues 402-412 (EPKHQPAREPR) and 536-559 (QRDE…RDPE).

Belongs to the DnaX/STICHEL family. DNA polymerase III contains a core (composed of alpha, epsilon and theta chains) that associates with a tau subunit. This core dimerizes to form the POLIII' complex. PolIII' associates with the gamma complex (composed of gamma, delta, delta', psi and chi chains) and with the beta chain to form the complete DNA polymerase III complex.

The enzyme catalyses DNA(n) + a 2'-deoxyribonucleoside 5'-triphosphate = DNA(n+1) + diphosphate. DNA polymerase III is a complex, multichain enzyme responsible for most of the replicative synthesis in bacteria. This DNA polymerase also exhibits 3' to 5' exonuclease activity. The polypeptide is DNA polymerase III subunit gamma/tau (dnaX) (Mycobacterium bovis (strain ATCC BAA-935 / AF2122/97)).